Consider the following 359-residue polypeptide: PWWP domain-containing protein 1 (359 aa).

The tract at residues 1–37 (MNNARTNAKRRRLSSKQGGLSISEGKESNIPSVVEES) is disordered. Residues 52 to 114 (FGDRILVKAP…RNSVKPLLDS (63 aa)) form the PWWP domain. Disordered regions lie at residues 133-161 (AYEASKTPPDLKEESSTDEEMDSLSAAEE) and 204-255 (VAST…SPLN). The span at 204–224 (VASTSRSSTQLSDQRYPLSSN) shows a compositional bias: polar residues. Ser-252 is subject to Phosphoserine.

As to quaternary structure, interacts with set9 and histone H4K20me1. Associates with nucleosomes.

Its subcellular location is the nucleus. Necessary for DNA damage checkpoint activation. Required for the association of set9 with chromatin and subsequent methylation of H4K20. Associates with H4K20me1 to increase the concentration of set9 on chromatin to perform H4K20me3. H4K20me3 is mainly enriched at heterochromatin and is required for proper heterochromatin assembly. The polypeptide is PWWP domain-containing protein 1 (pdp1) (Schizosaccharomyces pombe (strain 972 / ATCC 24843) (Fission yeast)).